Reading from the N-terminus, the 371-residue chain is MASVQLQNVTKAWGEVVVSKDINLDIHEGEFVVFVGPSGCGKSTLLRMIAGLETITSGDLFIGEKRMNDTPPAERGVGMVFQSYALYPHLSVAENMSFGLKLAGAKKEVINQRVNQVAEVLQLAHLLDRKPKALSGGQRQRVAIGRTLVAEPSVFLLDEPLSNLDAALRVQMRIEISRLHKRLGRTMIYVTHDQVEAMTLADKIVVLDAGRVAQVGKPLELYHYPADRFVAGFIGSPKMNFLPVKVTATAIDQVQVELPMPNRQQVWLPVESRDVQVGANMSLGIRPEHLLPSDIADVILEGEVQVVEQLGNETQIHIQIPSIRQNLVYRQNDVVLVEEGATFAIGLPPERCHLFREDGTACRRLHKEPGV.

One can recognise an ABC transporter domain in the interval 4 to 234 (VQLQNVTKAW…PADRFVAGFI (231 aa)). An ATP-binding site is contributed by 36 to 43 (GPSGCGKS).

Belongs to the ABC transporter superfamily. Maltooligosaccharide importer (TC 3.A.1.1.1) family. In terms of assembly, the complex is composed of two ATP-binding proteins (MalK), two transmembrane proteins (MalG and MalK) and a solute-binding protein (MalE).

It is found in the cell inner membrane. It catalyses the reaction D-maltose(out) + ATP + H2O = D-maltose(in) + ADP + phosphate + H(+). Its function is as follows. Part of the ABC transporter complex MalEFGK involved in maltose/maltodextrin import. Responsible for energy coupling to the transport system. This is Maltose/maltodextrin import ATP-binding protein MalK from Escherichia coli O157:H7.